The following is a 291-amino-acid chain: MKRILLFILTNVAVVAVLGIVASLLGVNRFLTANGLNLSALLGFALIMGFGGAIISLLISKPVAKWSAGVRLINDPQNADEAWIVETVRRLADKAQIGMPEVGIFEGEPNAFATGAFKNSSLVAVSTGLLQGMTKEEIEAVLGHEIAHVANGDMVTMTLIQGVMNTFVVFLSRVIGYAVDSFLRKGDSNSSGPGIGYYVSTIVLDIVLGFAAAIVVAWFSRHREFRADAGAAQLMGRKQPMMNALARLGGMQPGELPKAVEAMGITGSIGKLFATHPPIEERIAALQNAQG.

2 helical membrane passes run 4–24 (ILLF…VASL) and 39–59 (SALL…SLLI). Residue His144 coordinates Zn(2+). Residue Glu145 is part of the active site. His148 contacts Zn(2+). 2 consecutive transmembrane segments (helical) span residues 159–179 (LIQG…GYAV) and 199–219 (VSTI…VAWF). Position 224 (Glu224) interacts with Zn(2+).

It belongs to the peptidase M48B family. Requires Zn(2+) as cofactor.

It localises to the cell inner membrane. The protein is Protease HtpX homolog of Polaromonas naphthalenivorans (strain CJ2).